A 218-amino-acid polypeptide reads, in one-letter code: UPF0598 protein C8orf82 homolog (218 aa).

It belongs to the UPF0598 family.

The polypeptide is UPF0598 protein C8orf82 homolog (Rattus norvegicus (Rat)).